A 177-amino-acid chain; its full sequence is Large ribosomal subunit protein uL6 (177 aa).

It belongs to the universal ribosomal protein uL6 family. In terms of assembly, part of the 50S ribosomal subunit.

This protein binds to the 23S rRNA, and is important in its secondary structure. It is located near the subunit interface in the base of the L7/L12 stalk, and near the tRNA binding site of the peptidyltransferase center. In Cupriavidus metallidurans (strain ATCC 43123 / DSM 2839 / NBRC 102507 / CH34) (Ralstonia metallidurans), this protein is Large ribosomal subunit protein uL6.